The following is a 150-amino-acid chain: Leukotriene C4 synthase (150 aa).

Residues 1 to 6 lie on the Cytoplasmic side of the membrane; it reads MKDEVA. Residues 7–27 form a helical membrane-spanning segment; sequence LLASVTLLGVLLQAYFSLQVI. Topologically, residues 28–48 are lumenal; that stretch reads SARRAFRVSPPLTTGPPEFER. Arg30 contacts glutathione. The Proton donor role is filled by Arg31. Phosphoserine is present on Ser36. A helical transmembrane segment spans residues 49–69; it reads IYRAQVNCSEYFPLFLAMLWV. Glutathione contacts are provided by residues 51-55 and 58-59; these read RAQVN and EY. The Cytoplasmic segment spans residues 70-73; sequence AGIF. Residues 74–94 form a helical membrane-spanning segment; that stretch reads FHEGAAALCGLVYLFARLRYF. 93 to 97 contacts glutathione; it reads YFQGY. The Lumenal portion of the chain corresponds to 95 to 104; sequence QGYARSAQQR. Arg104 serves as the catalytic Proton acceptor. Residues 105–124 form a helical membrane-spanning segment; sequence LAPLYASARALWLLVALAAL. Topologically, residues 125 to 150 are cytoplasmic; that stretch reads GLLAHFLPAELRAALLGQLRKLLLRS.

Belongs to the MAPEG family. As to quaternary structure, homotrimer. Interacts with ALOX5AP and ALOX5. Phosphorylation at Ser-36 by RPS6KB1 inhibits the leukotriene-C4 synthase activity.

It localises to the nucleus outer membrane. The protein localises to the endoplasmic reticulum membrane. The protein resides in the nucleus membrane. It catalyses the reaction leukotriene C4 = leukotriene A4 + glutathione. It carries out the reaction (13S,14S)-epoxy-(4Z,7Z,9E,11E,16Z,19Z)-docosahexaenoate + glutathione = (13R)-S-glutathionyl-(14S)-hydroxy-(4Z,7Z,9E,11E,16Z,19Z)-docosahexaenoate. It functions in the pathway lipid metabolism; leukotriene C4 biosynthesis. Inhibited by MK886. Its function is as follows. Catalyzes the conjugation of leukotriene A4 with reduced glutathione (GSH) to form leukotriene C4 with high specificity. Can also catalyze the transfer of a glutathionyl group from glutathione (GSH) to 13(S),14(S)-epoxy-docosahexaenoic acid to form maresin conjugate in tissue regeneration 1 (MCTR1), a bioactive lipid mediator that possess potent anti-inflammatory and proresolving actions. This chain is Leukotriene C4 synthase (LTC4S), found in Bos taurus (Bovine).